The chain runs to 338 residues: Glyceraldehyde-3-phosphate dehydrogenase 2 (338 aa).

Residues 11–12 (RI), Asp-33, and Arg-78 each bind NAD(+). Residues 149–151 (SCT), Thr-180, 209–210 (TG), and Arg-232 each bind D-glyceraldehyde 3-phosphate. Cys-150 (nucleophile) is an active-site residue. Residue Asn-314 coordinates NAD(+).

The protein belongs to the glyceraldehyde-3-phosphate dehydrogenase family. Homotetramer.

It is found in the cytoplasm. It catalyses the reaction D-glyceraldehyde 3-phosphate + phosphate + NAD(+) = (2R)-3-phospho-glyceroyl phosphate + NADH + H(+). Its pathway is carbohydrate degradation; glycolysis; pyruvate from D-glyceraldehyde 3-phosphate: step 1/5. The protein is Glyceraldehyde-3-phosphate dehydrogenase 2 (gpd2) of Agaricus bisporus (White button mushroom).